Here is a 524-residue protein sequence, read N- to C-terminus: MDITIRQAVLRNFLGNSPDWYKLAIIAFLIINPLVFFFVSPFVAGWMLVIEFIFTLAMALKCYPLQPGGLLAIQAVAIGMTSPHQVAEEIANNLEVLLLLIFMVAGIYFMKQLLLFIFTKLLLSIRSKITLSLAFCVASAFLSAFLDALTVIAVVISVSVGFYTIYHHVASNHSDKDINDDSWIDSQENRKTLEQFRAFLRSLMMHAGVGTALGGVMTMVGEPQNLIIAKSAGWHFGDFFMRMLPVTLPVLCCGLLVCILLERFKLFGYGAVLPERVRQVLTDYDKQASAKRNRQEKVKLLVQALIGVWLVIALALHLAEVGLVGLSVIILATSFCGITNEHALGKAFQEALPFTALLTVFFAVVAVIIEQSLFTPIIQFVLQSSPSAQLSLFYLFNGLLSSVSDNVFVGTVYINEARKAFELGVISLQQFELLAVAINTGTNLPSVATPNGQAAFLFLLTSALAPLIRLSYGRMVYMALPYTIVMTGVGLLGVEYLLVPVTEWMIQSGWISLPHIAAGVSITH.

13 consecutive transmembrane segments (helical) span residues 23–43 (LAII…SPFV), 45–65 (GWML…CYPL), 98–118 (LLLI…LFIF), 136–156 (CVAS…AVVI), 203–223 (LMMH…VGEP), 239–259 (FFMR…LVCI), 304–324 (ALIG…VGLV), 325–345 (GLSV…HALG), 358–378 (LTVF…TPII), 392–412 (LFYL…VGTV), 420–440 (AFEL…AINT), 448–468 (ATPN…APLI), and 479–499 (ALPY…YLLV).

It belongs to the NhaB Na(+)/H(+) (TC 2.A.34) antiporter family.

The protein localises to the cell inner membrane. It carries out the reaction 2 Na(+)(in) + 3 H(+)(out) = 2 Na(+)(out) + 3 H(+)(in). Na(+)/H(+) antiporter that extrudes sodium in exchange for external protons. In Yersinia enterocolitica serotype O:8 / biotype 1B (strain NCTC 13174 / 8081), this protein is Na(+)/H(+) antiporter NhaB.